Here is a 591-residue protein sequence, read N- to C-terminus: ADP-ribosylating toxin CARDS (591 aa).

Positions 1-205 (MPNPVRFVYR…LPTPGIATPV (205 aa)) are mono-ADP ribosyltransferase (mART) domain. Positions 206 to 256 (HLSIPQAASVADVSEGTSASLSFACPDWSPPSSNGENPLDKCIAEKIDNYN) are NAD(+)-binding pocket. Cys230 and Cys247 are oxidised to a cystine. The short motif at 268-272 (KELED) is the KELED motif, involved in host ER trafficking, solvent exposed in the crystal structure element. A D2 domain region spans residues 273 to 439 (TPVYLRGIKT…QFVTMRAAST (167 aa)). A D3 domain region spans residues 440–591 (FFVDVQLGWY…ILVKDGFDRF (152 aa)).

Belongs to the bacterial exotoxin subunit A family. Monomer. Binds to host (human) pulmonary surfactant-associated protein A1 (SFTPA1), the major mammalian protein component of pulmonary surfactant. Binds to host (human) surface annexin A2 (ANXA2) on the cell surface; anti-ANXA2 antibodies decrease binding to cells. Interacts with cytosolic host (human) NLRP3, which it ADP-ribosylates in vitro. Post-translationally, 8 hours after treatment of HeLa cells with purified protein, a substantial amount is processed to 2 nearly equal-sized fragments. The disulfide bond between Cys-230 and Cys-247 is required to for the toxin to exert its mART and vacuolating activities within target cells, and for protein processing. Acidic pH in the endosome and retrograde transport are required for toxin cleavage, which is required for both toxin activities. Trypsin treatment under mild conditions leads to cleavage at Lys-305 and Lys-307; the 2 proteins fragments remain associated and can be internalized and vacuolate HeLa cells.

It is found in the cell membrane. It localises to the cytoplasm. The protein localises to the cell surface. The protein resides in the cell projection. Its subcellular location is the attachment organelle. It is found in the host cytoplasm. It localises to the host cytosol. The protein localises to the host endoplasmic reticulum. Its activity is regulated as follows. In vitro ADP-ribosylation is enhanced by dithiotheritol. Functionally, the main virulence factor for this bacteria, a mono-ADP-ribosylating toxin (mART), that transfers the ADP-ribosyl group from NAD(+) to multiple target proteins in vitro. Also elicits cytopathic effects in mammalian cells, such as disorganization and disruption of respiratory epithelial integrity in tracheal epithelium and vacuolization in the cytoplasm of CHO and HeLa cells as well as in mice and baboons. Treatment of mice or baboons with CARDS elicits a response that is consistent with human M.pneumoniae infections and mouse models of both infection and intoxication, suggesting that CARDS toxin is sufficient to cause prolonged inflammatory responses and airway dysfunction. Treatment of baboons with CARDS induces a number of cytokines; G-CSF (40 fold), IL-1Ra (10 fold), IL-6 and IL-8 (333 and 100 fold, respectively), MIP-1a (5 fold), and RANTES (9 fold). Treatment of mice gives a similar response. Binds phosphatidyl choline, dipalmitoylphosphatidylcholine (DPPC) and sphingomyelin via domains D2 plus D3. Has at least 2 host receptors SFTPA1 and ANXA2. Internalized by a clathrin-mediated process; protein is rapidly taken up at 37 degrees Celsius. Clathrin-independent or caveolin-dependent endocytosis were not detected. In HeLa cells internalized CARDS trafficks toward the nucleus by retrograde transport from early to late endosomes, then the Golgi apparatus; at 16 hours most toxin is concentrated in the perinuclear region in the host endoplasmic reticulum (ER). Failure to localize to the host ER prevents ADP-ribosylation and vacuolization. An acidic compartment is required to mediate retrotransport and processing of toxin into an N-terminal fragment with mART activity and a C-terminal fragment that is able to induce vacuolization. In terms of biological role, induces the host NLRP3 inflammasome to release interleukin-1 beta (IL-1 beta); IL-1 beta release requires ADP-ribosylation activity and uptake by host macrophages. In the host colocalizes with the NLRP3 inflammasome; ADP-ribosylates NLRP3 in vitro. ADP-ribosylation of NLRP3 may lead to hyperinflammation. The sequence is that of ADP-ribosylating toxin CARDS from Mycoplasma pneumoniae (strain ATCC 29342 / M129 / Subtype 1) (Mycoplasmoides pneumoniae).